A 509-amino-acid polypeptide reads, in one-letter code: MTNTIVISCLHNMAAILYCGQIQKLVVANAHYQVSDIYLGCVDKIFSGINAAFINLGKNEYSGFIHISDTGPLKKKYYVNNITNILTIRQKILVQIIKEPTLNKGPRLTANITLSGRYIVLMPFSQSICISRKIYDEDERHYLKSLAILIKPATMGLLFRPSAVGVDEEIILSELKNLKEQWNFVQKSAINSYSPVLLYKDEDIVKKVIRDFYNNNTNNIVIDSNLGLKQLNYYIHTWHCNNSSTVPKIKLYSNNQCILDAFGINQAISRALIPKVDLILGGYMFIETLEAFTIIDVNSGSFNNSTSARETVLKTNCSAATEIAYQLQIRNITGVIIIDFIDMESQRDQLQLLEHFNKELSLDDAKPQIVQLSELGLVELTRRRQGKSLYELISSDSNYFYFFTQSERSQSLKRFDDRQQKQQIFNKSWLSAEINTINKVFFQKSNLCRPANFYLIRNLYIVKSSITYKQNYLLTHRSKLIYSKEYSKVLPSSYYLASLNKNSNQEFLS.

The S1 motif domain maps to 35–117 (SDIYLGCVDK…LTANITLSGR (83 aa)). Mg(2+) contacts are provided by aspartate 296 and aspartate 339.

The protein belongs to the RNase E/G family. Mg(2+) serves as cofactor.

The protein resides in the plastid. The protein localises to the chloroplast stroma. In terms of biological role, involved in intercistronic processing of primary transcripts from chloroplast operons. The endonucleolytic activity of the enzyme depends on the number of phosphates at the 5' end, is inhibited by structured RNA, and preferentially cleaves A/U-rich sequences. This Pyropia yezoensis (Susabi-nori) protein is Ribonuclease E/G-like protein (rne).